The following is a 62-amino-acid chain: DNA-directed RNA polymerase subunit omega (62 aa).

It belongs to the RNA polymerase subunit omega family. In terms of assembly, the RNAP catalytic core consists of 2 alpha, 1 beta, 1 beta' and 1 omega subunit. When a sigma factor is associated with the core the holoenzyme is formed, which can initiate transcription.

The enzyme catalyses RNA(n) + a ribonucleoside 5'-triphosphate = RNA(n+1) + diphosphate. Promotes RNA polymerase assembly. Latches the N- and C-terminal regions of the beta' subunit thereby facilitating its interaction with the beta and alpha subunits. This chain is DNA-directed RNA polymerase subunit omega, found in Wigglesworthia glossinidia brevipalpis.